The sequence spans 242 residues: Segregation and condensation protein A (242 aa).

Belongs to the ScpA family. In terms of assembly, component of a cohesin-like complex composed of ScpA, ScpB and the Smc homodimer, in which ScpA and ScpB bind to the head domain of Smc. The presence of the three proteins is required for the association of the complex with DNA.

Its subcellular location is the cytoplasm. Participates in chromosomal partition during cell division. May act via the formation of a condensin-like complex containing Smc and ScpB that pull DNA away from mid-cell into both cell halves. This is Segregation and condensation protein A from Streptococcus pneumoniae (strain Taiwan19F-14).